Reading from the N-terminus, the 107-residue chain is MKDLMGLMKQAQAMQQKMTEAQARLAETEVTGEAGAGLVRVVLTAKGDMVSIHVDKSLMDPDEPEILEDLLKAAHADARRKGEEAQQDIMKDAAGGLQLPPGMQMPF.

It belongs to the YbaB/EbfC family. In terms of assembly, homodimer.

Its subcellular location is the cytoplasm. It is found in the nucleoid. Its function is as follows. Binds to DNA and alters its conformation. May be involved in regulation of gene expression, nucleoid organization and DNA protection. The sequence is that of Nucleoid-associated protein Mmar10_0436 from Maricaulis maris (strain MCS10) (Caulobacter maris).